The sequence spans 225 residues: MSLIQSFKLVLSPPHRAATPFLLAGSLVGLLGRATPWRPTRLLGNAGIAFTAFCLYFFRDPKRVPPPRADLVLASADGRVTSVALVTPPAALEMGHTPVWRVSTFLSVLNVHINRMPAAGEVTKIAYHAGKFLNASFDKASEHNERNELRLTLPDGRNIGVVQIAGLIARRILCFVEEGDRVEAGERFGLIRFGSRTDVYLPPGVEPLVVEGQTMVGGETVLAKL.

Residue serine 195 is the Schiff-base intermediate with substrate; via pyruvic acid of the active site. Serine 195 is modified (pyruvic acid (Ser); by autocatalysis).

The protein belongs to the phosphatidylserine decarboxylase family. PSD-A subfamily. In terms of assembly, heterodimer of a large membrane-associated beta subunit and a small pyruvoyl-containing alpha subunit. Pyruvate is required as a cofactor. In terms of processing, is synthesized initially as an inactive proenzyme. Formation of the active enzyme involves a self-maturation process in which the active site pyruvoyl group is generated from an internal serine residue via an autocatalytic post-translational modification. Two non-identical subunits are generated from the proenzyme in this reaction, and the pyruvate is formed at the N-terminus of the alpha chain, which is derived from the carboxyl end of the proenzyme. The post-translation cleavage follows an unusual pathway, termed non-hydrolytic serinolysis, in which the side chain hydroxyl group of the serine supplies its oxygen atom to form the C-terminus of the beta chain, while the remainder of the serine residue undergoes an oxidative deamination to produce ammonia and the pyruvoyl prosthetic group on the alpha chain.

The protein resides in the cell membrane. The enzyme catalyses a 1,2-diacyl-sn-glycero-3-phospho-L-serine + H(+) = a 1,2-diacyl-sn-glycero-3-phosphoethanolamine + CO2. It participates in phospholipid metabolism; phosphatidylethanolamine biosynthesis; phosphatidylethanolamine from CDP-diacylglycerol: step 2/2. Its function is as follows. Catalyzes the formation of phosphatidylethanolamine (PtdEtn) from phosphatidylserine (PtdSer). The chain is Phosphatidylserine decarboxylase proenzyme from Gluconobacter oxydans (strain 621H) (Gluconobacter suboxydans).